The sequence spans 503 residues: Glutamate--tRNA ligase (503 aa).

Positions 15–25 (PSPTGHLHVGG) match the 'HIGH' region motif. The 'KMSKS' region signature appears at 262-266 (KLSKR). Lys265 is an ATP binding site.

The protein belongs to the class-I aminoacyl-tRNA synthetase family. Glutamate--tRNA ligase type 1 subfamily. In terms of assembly, monomer.

It localises to the cytoplasm. It catalyses the reaction tRNA(Glu) + L-glutamate + ATP = L-glutamyl-tRNA(Glu) + AMP + diphosphate. In terms of biological role, catalyzes the attachment of glutamate to tRNA(Glu) in a two-step reaction: glutamate is first activated by ATP to form Glu-AMP and then transferred to the acceptor end of tRNA(Glu). This is Glutamate--tRNA ligase from Chlorobium phaeobacteroides (strain BS1).